A 238-amino-acid chain; its full sequence is Small ribosomal subunit protein uS3 (238 aa).

One can recognise a KH type-2 domain in the interval methionine 39–arginine 107. Positions proline 212–alanine 222 are enriched in basic and acidic residues. The disordered stretch occupies residues proline 212–alanine 238.

Belongs to the universal ribosomal protein uS3 family. As to quaternary structure, part of the 30S ribosomal subunit. Forms a tight complex with proteins S10 and S14.

Functionally, binds the lower part of the 30S subunit head. Binds mRNA in the 70S ribosome, positioning it for translation. This is Small ribosomal subunit protein uS3 from Cereibacter sphaeroides (strain ATCC 17029 / ATH 2.4.9) (Rhodobacter sphaeroides).